The following is a 298-amino-acid chain: MGKQDILWGIAPIGWRNDDMPEIGAGNTLQHLLSDIVVAGFQGTEVGGFFPEPSVLNKELALRNLRIAGKWFSSFIIQDGIEKMAEQFTEHCDYLQKVGADVAIVSEQTYSVQGLDIDVFKEKPHFSDEEWDTLCQGLNRLGKIAGEYGLDLTFHHHLGTGVQTAEEVDRLMDGTDPRYVHLLYDTGHAYISDGDYMTILNKHMDRIRHVHFKDARFDIMERCRQEGKSFRQSFLQGIFTVPGDGCIDFTEVYRTLVRHDYSGWIVIEAEQDPAVANPLEYALIARKYIDSELLDPAN.

It belongs to the IolE/MocC family. Requires glutathione as cofactor. The cofactor is Co(2+). Mn(2+) is required as a cofactor.

It catalyses the reaction scyllo-inosose = 3D-3,5/4-trihydroxycyclohexane-1,2-dione + H2O. The protein operates within polyol metabolism; myo-inositol degradation into acetyl-CoA; acetyl-CoA from myo-inositol: step 2/7. In terms of biological role, catalyzes the dehydration of inosose (2-keto-myo-inositol, 2KMI or 2,4,6/3,5-pentahydroxycyclohexanone) to 3D-(3,5/4)-trihydroxycyclohexane-1,2-dione (D-2,3-diketo-4-deoxy-epi-inositol). The sequence is that of Inosose dehydratase from Bacillus velezensis (strain DSM 23117 / BGSC 10A6 / LMG 26770 / FZB42) (Bacillus amyloliquefaciens subsp. plantarum).